The sequence spans 136 residues: Protein NrdI (136 aa).

The protein belongs to the NrdI family.

Functionally, probably involved in ribonucleotide reductase function. This is Protein NrdI from Salmonella newport (strain SL254).